A 205-amino-acid polypeptide reads, in one-letter code: Protein N-terminal glutamine amidohydrolase (205 aa).

Catalysis depends on residues Cys20, His74, and Asp90.

This sequence belongs to the NTAQ1 family. Monomer.

The catalysed reaction is N-terminal L-glutaminyl-[protein] + H2O = N-terminal L-glutamyl-[protein] + NH4(+). Its function is as follows. Mediates the side-chain deamidation of N-terminal glutamine residues to glutamate, an important step in N-end rule pathway of protein degradation. Conversion of the resulting N-terminal glutamine to glutamate renders the protein susceptible to arginylation, polyubiquitination and degradation as specified by the N-end rule. Does not act on substrates with internal or C-terminal glutamine and does not act on non-glutamine residues in any position. The sequence is that of Protein N-terminal glutamine amidohydrolase (tun) from Drosophila willistoni (Fruit fly).